Reading from the N-terminus, the 200-residue chain is Recombination protein RecR (200 aa).

A C4-type zinc finger spans residues 60 to 75 (CVYCQALTEDDVCNIC). Positions 83–177 (TKLCIIESML…KISRIGFGVP (95 aa)) constitute a Toprim domain.

It belongs to the RecR family.

Functionally, may play a role in DNA repair. It seems to be involved in an RecBC-independent recombinational process of DNA repair. It may act with RecF and RecO. This chain is Recombination protein RecR, found in Francisella tularensis subsp. novicida (strain U112).